The primary structure comprises 165 residues: Large ribosomal subunit protein uL15 (165 aa).

Residues 1-30 (MTNKKRRQRGSRTHGGGTHKNRRGAGHRGG) show a composition bias toward basic residues. Disordered regions lie at residues 1 to 39 (MTNK…RAKH) and 137 to 165 (AGGE…DDEA). Residues 150–165 (AADESENTSDDEDDEA) show a composition bias toward acidic residues.

The protein belongs to the universal ribosomal protein uL15 family. In terms of assembly, part of the 50S ribosomal subunit.

Functionally, binds to the 23S rRNA. The protein is Large ribosomal subunit protein uL15 of Halorubrum lacusprofundi (strain ATCC 49239 / DSM 5036 / JCM 8891 / ACAM 34).